Consider the following 480-residue polypeptide: DnaJ homolog subfamily A member 3, mitochondrial (480 aa).

Position 58 is an omega-N-methylarginine; by CARM1 (R58). One can recognise a J domain in the interval 93–158 (DYYQILGVPR…VKRKQYDAYG (66 aa)). Position 134 is an N6-acetyllysine (K134). The segment at 223–301 (GVNKEFTVNI…CRGAGQAKQK (79 aa)) adopts a CR-type zinc-finger fold. A Zn(2+)-binding site is contributed by C236. CXXCXGXG motif repeat units follow at residues 236 to 243 (CERCDGKG), 253 to 260 (CHYCGGSG), 275 to 282 (CRRCGGRG), and 289 to 296 (CVVCRGAG). Position 238 is an omega-N-methylarginine; by CARM1 (R238). Residues C239, C253, C256, C275, C278, C289, and C292 each coordinate Zn(2+). Omega-N-methylarginine; by CARM1 is present on R293. S398 carries the post-translational modification Phosphoserine. Residues 437-468 (TVNGVTHTSTGGRTMDSSAGSKDRREAGEDNE) form a disordered region. Polar residues predominate over residues 439-456 (NGVTHTSTGGRTMDSSAG).

Interacts with JAK2, HSPA9B and IFN-gammaR2 chain. Interacts with Ras GTPase-activating protein 1 (RASA1). Isoform 2 interacts with MUSK (via the cytoplasmic domain). Post-translationally, tyrosine phosphorylated.

It is found in the mitochondrion matrix. Its subcellular location is the cytoplasm. The protein localises to the cytosol. The protein resides in the postsynaptic cell membrane. Its function is as follows. Modulates apoptotic signal transduction or effector structures within the mitochondrial matrix. Affect cytochrome C release from the mitochondria and caspase 3 activation, but not caspase 8 activation. Isoform 1 increases apoptosis triggered by both TNF and the DNA-damaging agent mytomycin C; in sharp contrast, isoform 2 suppresses apoptosis. Can modulate IFN-gamma-mediated transcriptional activity. Isoform 2 may play a role in neuromuscular junction development as an effector of the MUSK signaling pathway. The sequence is that of DnaJ homolog subfamily A member 3, mitochondrial (Dnaja3) from Mus musculus (Mouse).